Consider the following 563-residue polypeptide: Putative cysteine ligase BshC (563 aa).

This sequence belongs to the BshC family.

This is Putative cysteine ligase BshC from Chlorobium phaeobacteroides (strain BS1).